We begin with the raw amino-acid sequence, 39 residues long: Cytochrome b559 subunit beta (39 aa).

The helical transmembrane segment at 14 to 30 (WLAIHGLAVPTVFFLGS) threads the bilayer. H18 contacts heme.

Belongs to the PsbE/PsbF family. In terms of assembly, heterodimer of an alpha subunit and a beta subunit. PSII is composed of 1 copy each of membrane proteins PsbA, PsbB, PsbC, PsbD, PsbE, PsbF, PsbH, PsbI, PsbJ, PsbK, PsbL, PsbM, PsbT, PsbX, PsbY, PsbZ, Psb30/Ycf12, at least 3 peripheral proteins of the oxygen-evolving complex and a large number of cofactors. It forms dimeric complexes. Heme b is required as a cofactor.

It is found in the plastid. Its subcellular location is the chloroplast thylakoid membrane. In terms of biological role, this b-type cytochrome is tightly associated with the reaction center of photosystem II (PSII). PSII is a light-driven water:plastoquinone oxidoreductase that uses light energy to abstract electrons from H(2)O, generating O(2) and a proton gradient subsequently used for ATP formation. It consists of a core antenna complex that captures photons, and an electron transfer chain that converts photonic excitation into a charge separation. This is Cytochrome b559 subunit beta from Staurastrum punctulatum (Green alga).